Here is a 234-residue protein sequence, read N- to C-terminus: Short neuropeptide F (234 aa).

The signal sequence occupies residues 1 to 22 (MYRINLTTFTLLLVLAVGSLMS). A propeptide spanning residues 23-56 (ESLHPSDGAINDLYEYLLQREYAAPVSYADHQIK) is cleaved from the precursor. Residues Phe-69 and Phe-101 each carry the phenylalanine amide modification. Position 132 is a tryptophan amide (Trp-132). Residue Phe-165 is modified to Phenylalanine amide. The segment covering 181–190 (TTGQQAQPAN) has biased composition (polar residues). Positions 181-234 (TTGQQAQPANEASEKRAPTQRLRWGRSDPALAKDSSEDKALDVEESENTNADDK) are disordered. Trp-204 is modified (tryptophan amide). Residues 207–234 (SDPALAKDSSEDKALDVEESENTNADDK) constitute a propeptide that is removed on maturation.

The protein belongs to the NPY family. In terms of tissue distribution, expressed in all body parts of larva, pupae and adults.

Its subcellular location is the secreted. In terms of biological role, plays a role in controlling food intake and regulating body size. The protein is Short neuropeptide F of Anopheles gambiae (African malaria mosquito).